Here is a 250-residue protein sequence, read N- to C-terminus: FAS1 domain-containing protein AER383W (250 aa).

Residues 1 to 18 (MRLKTILLGFCAFHVARS) form the signal peptide. Positions 87–247 (GVTLDDRLQS…GIVLVIDSSL (161 aa)) constitute an FAS1 domain.

The protein resides in the vacuole. The sequence is that of FAS1 domain-containing protein AER383W from Eremothecium gossypii (strain ATCC 10895 / CBS 109.51 / FGSC 9923 / NRRL Y-1056) (Yeast).